A 912-amino-acid polypeptide reads, in one-letter code: Metabotropic glutamate receptor 4 (912 aa).

The N-terminal stretch at 1 to 32 (MPGKSGLGWWWARLPLCLLLSLYGPWMPSSLG) is a signal peptide. The Extracellular portion of the chain corresponds to 33–586 (KPKGHPHMNS…PIIKLEWDSP (554 aa)). C67 and C109 form a disulfide bridge. N98 is a glycosylation site (N-linked (GlcNAc...) asparagine). L-glutamate is bound by residues S159, 180-182 (AST), and Y230. 7 disulfide bridges follow: C249–C538, C372–C388, C428–C435, C520–C539, C524–C542, C545–C557, and C560–C573. N-linked (GlcNAc...) asparagine glycosylation occurs at N301. D312 is a binding site for L-glutamate. Residue K405 coordinates L-glutamate. N-linked (GlcNAc...) asparagine glycans are attached at residues N454 and N484. N-linked (GlcNAc...) asparagine glycosylation occurs at N569. Residues 587 to 607 (WAVLPLFLAVVGIAATLFVVI) form a helical membrane-spanning segment. Residues 608–624 (TFVRYNDTPIVKASGRE) are Cytoplasmic-facing. A helical membrane pass occupies residues 625–645 (LSYVLLAGIFLCYATTFLMIA). Residues 646 to 653 (EPDLGTCS) lie on the Extracellular side of the membrane. Residues 654-671 (LRRIFLGLGMSISYAALL) traverse the membrane as a helical segment. Residues 672-699 (TKTNRIYRIFEQGKRSVSAPRFISPASQ) lie on the Cytoplasmic side of the membrane. A helical transmembrane segment spans residues 700-720 (LAITFSLISLQLLGICVWFVV). The Extracellular portion of the chain corresponds to 721-751 (DPSHSVVDFQDQRTLDPRFARGVLKCDISDL). A helical transmembrane segment spans residues 752–772 (SLICLLGYSMLLMVTCTVYAI). Residues 773–786 (KTRGVPETFNEAKP) are Cytoplasmic-facing. A helical membrane pass occupies residues 787–807 (IGFTMYTTCIVWLAFIPIFFG). Residues 808-826 (TSQSADKLYIQTTTLTVSV) are Extracellular-facing. The chain crosses the membrane as a helical span at residues 827–847 (SLSASVSLGMLYMPKVYIILF). Residues 848 to 912 (HPEQNVPKRK…TYVTYTNHAI (65 aa)) are Cytoplasmic-facing.

The protein belongs to the G-protein coupled receptor 3 family. Interacts with PICK1.

The protein localises to the cell membrane. Its function is as follows. G-protein coupled receptor for glutamate. Ligand binding causes a conformation change that triggers signaling via guanine nucleotide-binding proteins (G proteins) and modulates the activity of down-stream effectors. Signaling inhibits adenylate cyclase activity. The chain is Metabotropic glutamate receptor 4 (GRM4) from Macaca fascicularis (Crab-eating macaque).